Here is a 594-residue protein sequence, read N- to C-terminus: Pre-mRNA-processing protein 45 (594 aa).

Disordered stretches follow at residues 36-63, 223-254, 370-426, 498-523, and 566-594; these read TTEY…RKGW, PPRF…TAQD, ETGI…SEMR, AGSS…SKDR, and EQFM…ARDE. Pro residues-rich tracts occupy residues 44 to 53 and 235 to 244; these read APLPATPGPQ and PAEPPPPVLQ. Acidic residues predominate over residues 383 to 397; the sequence is GSEEESDEEEEDEEA. Basic and acidic residues-rich tracts occupy residues 398-417, 513-523, and 578-594; these read IRER…KEMR, EGIKEEMSKDR, and RTAE…ARDE.

It belongs to the SNW family. As to quaternary structure, associated with the spliceosome.

Its subcellular location is the nucleus. In terms of biological role, involved in pre-mRNA splicing. This is Pre-mRNA-processing protein 45 (PRP45) from Cryptococcus neoformans var. neoformans serotype D (strain B-3501A) (Filobasidiella neoformans).